The chain runs to 237 residues: Ribose-5-phosphate isomerase A (237 aa).

Substrate contacts are provided by residues 33–36 (TGST), 90–93 (DGAD), and 103–106 (KGGG). Residue Glu-112 is the Proton acceptor of the active site. Lys-130 lines the substrate pocket.

It belongs to the ribose 5-phosphate isomerase family. Homodimer.

The catalysed reaction is aldehydo-D-ribose 5-phosphate = D-ribulose 5-phosphate. The protein operates within carbohydrate degradation; pentose phosphate pathway; D-ribose 5-phosphate from D-ribulose 5-phosphate (non-oxidative stage): step 1/1. Functionally, catalyzes the reversible conversion of ribose-5-phosphate to ribulose 5-phosphate. This is Ribose-5-phosphate isomerase A from Trichodesmium erythraeum (strain IMS101).